The sequence spans 586 residues: Probable lysosomal cobalamin transporter (586 aa).

9 helical membrane passes run Ile10–Phe30, Val47–Val67, Ile96–Ala116, Ser147–Gly167, Ala191–Thr211, Leu315–Thr335, Ile378–Val398, Ile420–Met440, and Val509–Leu529. The N-linked (GlcNAc...) asparagine glycan is linked to Asn540.

Belongs to the LIMR family. LMBRD1 subfamily.

The protein localises to the lysosome membrane. Functionally, probable lysosomal cobalamin transporter. Required to export cobalamin from lysosomes allowing its conversion to cofactors. The protein is Probable lysosomal cobalamin transporter of Pyricularia oryzae (strain 70-15 / ATCC MYA-4617 / FGSC 8958) (Rice blast fungus).